The chain runs to 353 residues: UDP-N-acetylglucosamine--N-acetylmuramyl-(pentapeptide) pyrophosphoryl-undecaprenol N-acetylglucosamine transferase (353 aa).

UDP-N-acetyl-alpha-D-glucosamine contacts are provided by residues T10–G12, N124, S183, and Q283.

It belongs to the glycosyltransferase 28 family. MurG subfamily.

The protein localises to the cell inner membrane. It carries out the reaction di-trans,octa-cis-undecaprenyl diphospho-N-acetyl-alpha-D-muramoyl-L-alanyl-D-glutamyl-meso-2,6-diaminopimeloyl-D-alanyl-D-alanine + UDP-N-acetyl-alpha-D-glucosamine = di-trans,octa-cis-undecaprenyl diphospho-[N-acetyl-alpha-D-glucosaminyl-(1-&gt;4)]-N-acetyl-alpha-D-muramoyl-L-alanyl-D-glutamyl-meso-2,6-diaminopimeloyl-D-alanyl-D-alanine + UDP + H(+). The protein operates within cell wall biogenesis; peptidoglycan biosynthesis. Functionally, cell wall formation. Catalyzes the transfer of a GlcNAc subunit on undecaprenyl-pyrophosphoryl-MurNAc-pentapeptide (lipid intermediate I) to form undecaprenyl-pyrophosphoryl-MurNAc-(pentapeptide)GlcNAc (lipid intermediate II). The sequence is that of UDP-N-acetylglucosamine--N-acetylmuramyl-(pentapeptide) pyrophosphoryl-undecaprenol N-acetylglucosamine transferase from Helicobacter pylori (strain P12).